Reading from the N-terminus, the 398-residue chain is Elongation factor Tu (398 aa).

One can recognise a tr-type G domain in the interval 10 to 207 (KPHVNIGTIG…TVDSYIPEPE (198 aa)). The tract at residues 19–26 (GHVDHGKT) is G1. 19–26 (GHVDHGKT) contacts GTP. Threonine 26 contributes to the Mg(2+) binding site. A G2 region spans residues 63–67 (GITIN). Residues 84–87 (DAPG) form a G3 region. Residues 84–88 (DAPGH) and 139–142 (NKVD) each bind GTP. The G4 stretch occupies residues 139-142 (NKVD). The G5 stretch occupies residues 177 to 179 (SAL).

Belongs to the TRAFAC class translation factor GTPase superfamily. Classic translation factor GTPase family. EF-Tu/EF-1A subfamily. As to quaternary structure, monomer.

The protein resides in the cytoplasm. It catalyses the reaction GTP + H2O = GDP + phosphate + H(+). Functionally, GTP hydrolase that promotes the GTP-dependent binding of aminoacyl-tRNA to the A-site of ribosomes during protein biosynthesis. This Streptococcus pyogenes serotype M28 (strain MGAS6180) protein is Elongation factor Tu.